We begin with the raw amino-acid sequence, 255 residues long: Taurine import ATP-binding protein TauB (255 aa).

The 228-residue stretch at 2 to 229 (LQISHLYADY…RFVAGESSRS (228 aa)) folds into the ABC transporter domain. 34-41 (GPSGCGKT) serves as a coordination point for ATP.

It belongs to the ABC transporter superfamily. Taurine importer (TC 3.A.1.17.1) family. As to quaternary structure, the complex is composed of two ATP-binding proteins (TauB), two transmembrane proteins (TauC) and a solute-binding protein (TauA).

The protein resides in the cell inner membrane. The enzyme catalyses taurine(out) + ATP + H2O = taurine(in) + ADP + phosphate + H(+). Functionally, part of the ABC transporter complex TauABC involved in taurine import. Responsible for energy coupling to the transport system. The chain is Taurine import ATP-binding protein TauB from Shigella boydii serotype 4 (strain Sb227).